The chain runs to 1341 residues: Aldehyde oxidase 4 (1341 aa).

Residues 8–95 enclose the 2Fe-2S ferredoxin-type domain; it reads DELIFFVNGK…GAAVTTVEGV (88 aa). Residues Cys-47, Cys-52, Cys-55, and Cys-77 each contribute to the [2Fe-2S] cluster site. Gln-116 is a Mo-molybdopterin binding site. Residues Cys-117, Cys-120, Cys-152, and Cys-154 each coordinate [2Fe-2S] cluster. Cys-154 serves as a coordination point for Mo-molybdopterin. The region spanning 239–424 is the FAD-binding PCMH-type domain; it reads FQGERTTWLA…LSVFIPYSSQ (186 aa). FAD contacts are provided by residues 267–274, Ala-348, Thr-357, His-361, Asp-370, and Val-414; that span reads LIMGNTTV. Mo-molybdopterin contacts are provided by residues Ala-805, 805–806, Leu-1046, 1087–1090, Gln-1202, and Leu-1266; these read AF and GSMG. Residue Glu-1268 is the Proton acceptor; for azaheterocycle hydroxylase activity of the active site.

This sequence belongs to the xanthine dehydrogenase family. In terms of assembly, homodimer. Requires [2Fe-2S] cluster as cofactor. It depends on FAD as a cofactor. Mo-molybdopterin serves as cofactor. Detected in liver, testis, kidney, brain, Harderian gland and olfactory mucosa.

The protein resides in the cytoplasm. The enzyme catalyses an aldehyde + O2 + H2O = a carboxylate + H2O2 + H(+). The catalysed reaction is retinal + O2 + H2O = retinoate + H2O2 + H(+). Aldehyde oxidase able to catalyze the oxidation of retinaldehyde into retinoate. Acts as a negative modulator of the epidermal trophism. May be able to oxidize a wide variety of aldehydes into their corresponding carboxylates and to hydroxylate azaheterocycles. The polypeptide is Aldehyde oxidase 4 (AOX4) (Cavia porcellus (Guinea pig)).